The following is a 431-amino-acid chain: Adenylosuccinate synthetase (431 aa).

GTP-binding positions include 12–18 (GDEGKGK) and 40–42 (GHT). The active-site Proton acceptor is the D13. Residues D13 and G40 each contribute to the Mg(2+) site. Residues 13–16 (DEGK), 38–41 (NAGH), T131, R145, Q225, T240, and R304 contribute to the IMP site. The active-site Proton donor is the H41. 300–306 (VNTGRPR) is a binding site for substrate. GTP contacts are provided by residues R306, 332-334 (KLD), and 414-416 (STS).

The protein belongs to the adenylosuccinate synthetase family. Homodimer. Requires Mg(2+) as cofactor.

Its subcellular location is the cytoplasm. It catalyses the reaction IMP + L-aspartate + GTP = N(6)-(1,2-dicarboxyethyl)-AMP + GDP + phosphate + 2 H(+). Its pathway is purine metabolism; AMP biosynthesis via de novo pathway; AMP from IMP: step 1/2. Functionally, plays an important role in the de novo pathway of purine nucleotide biosynthesis. Catalyzes the first committed step in the biosynthesis of AMP from IMP. The protein is Adenylosuccinate synthetase of Rhizobium rhizogenes (strain K84 / ATCC BAA-868) (Agrobacterium radiobacter).